The primary structure comprises 458 residues: tRNA-2-methylthio-N(6)-dimethylallyladenosine synthase (458 aa).

In terms of domain architecture, MTTase N-terminal spans 2 to 118; sequence PKLYIKTYGC…VFEHVDGILR (117 aa). Cys-11, Cys-47, Cys-81, Cys-170, Cys-174, and Cys-177 together coordinate [4Fe-4S] cluster. The 234-residue stretch at 156–389 folds into the Radical SAM core domain; sequence PGVRSTAYVS…LAVVNEIAIR (234 aa). A TRAM domain is found at 392-455; the sequence is RDLVGTVQEV…GFTLYGVPCP (64 aa).

Belongs to the methylthiotransferase family. MiaB subfamily. Monomer. [4Fe-4S] cluster serves as cofactor.

The protein localises to the cytoplasm. It carries out the reaction N(6)-dimethylallyladenosine(37) in tRNA + (sulfur carrier)-SH + AH2 + 2 S-adenosyl-L-methionine = 2-methylsulfanyl-N(6)-dimethylallyladenosine(37) in tRNA + (sulfur carrier)-H + 5'-deoxyadenosine + L-methionine + A + S-adenosyl-L-homocysteine + 2 H(+). In terms of biological role, catalyzes the methylthiolation of N6-(dimethylallyl)adenosine (i(6)A), leading to the formation of 2-methylthio-N6-(dimethylallyl)adenosine (ms(2)i(6)A) at position 37 in tRNAs that read codons beginning with uridine. The protein is tRNA-2-methylthio-N(6)-dimethylallyladenosine synthase of Akkermansia muciniphila (strain ATCC BAA-835 / DSM 22959 / JCM 33894 / BCRC 81048 / CCUG 64013 / CIP 107961 / Muc).